The following is a 279-amino-acid chain: Thymidylate synthase (279 aa).

133 to 134 (RR) provides a ligand contact to dUMP. The Nucleophile role is filled by cysteine 154. DUMP contacts are provided by residues 178-181 (RSND), asparagine 189, and 219-221 (HIY). Position 181 (aspartate 181) interacts with (6R)-5,10-methylene-5,6,7,8-tetrahydrofolate. Alanine 278 is a (6R)-5,10-methylene-5,6,7,8-tetrahydrofolate binding site.

The protein belongs to the thymidylate synthase family. Bacterial-type ThyA subfamily. In terms of assembly, homodimer.

The protein localises to the cytoplasm. The catalysed reaction is dUMP + (6R)-5,10-methylene-5,6,7,8-tetrahydrofolate = 7,8-dihydrofolate + dTMP. The protein operates within pyrimidine metabolism; dTTP biosynthesis. In terms of biological role, catalyzes the reductive methylation of 2'-deoxyuridine-5'-monophosphate (dUMP) to 2'-deoxythymidine-5'-monophosphate (dTMP) while utilizing 5,10-methylenetetrahydrofolate (mTHF) as the methyl donor and reductant in the reaction, yielding dihydrofolate (DHF) as a by-product. This enzymatic reaction provides an intracellular de novo source of dTMP, an essential precursor for DNA biosynthesis. The protein is Thymidylate synthase of Streptococcus suis (strain 05ZYH33).